A 230-amino-acid polypeptide reads, in one-letter code: CRP-like protein Clp (230 aa).

18 to 139 (PSLTLDAGTI…APRILYAIGV (122 aa)) contacts a nucleoside 3',5'-cyclic phosphate. The HTH crp-type domain maps to 158–230 (LDVTDRIVRT…GKTVVLYGTR (73 aa)). Positions 190-209 (RQELARLVGCSREMAGRVLK) form a DNA-binding region, H-T-H motif.

As to quaternary structure, homodimer.

It is found in the cytoplasm. Allosterically inhibited by cyclic di-GMP (c-di-GMP), which binds to Clp and abolishes its ability to bind its target gene promoter. Functionally, global transcriptional regulator that regulates virulence factors production by activating or repressing the expression of a large set of genes in diffusible signal factor (DSF) pathway. The polypeptide is CRP-like protein Clp (clp) (Xanthomonas campestris pv. campestris (strain 8004)).